The following is a 351-amino-acid chain: Outer membrane protein A (351 aa).

An N-terminal signal peptide occupies residues 1 to 21 (MKKTAIAITVALAGFATVAQA). Beta stranded transmembrane passes span 27 to 37 (TWYTGAKLGWS), 55 to 66 (QLGAGAFGGYQV), 70 to 78 (VGFEMGYDW), 96 to 107 (QGVQLTAKLGYP), 112 to 120 (LDVYTRLGG), 147 to 156 (PVFAGGVEWA), 161 to 168 (IATRLEYQ), and 187 to 195 (LLSLGVSYR). Tandem repeats lie at residues 206–207 (AP), 208–209 (AP), 210–211 (AP), and 212–213 (AP). Positions 206-213 (APAPAPAP) are 4 X 2 AA tandem repeats of A-P. Residues 215–343 (VQTKHFTLKS…RVEIEVKGIK (129 aa)) form the OmpA-like domain. Cysteines 316 and 328 form a disulfide.

This sequence belongs to the outer membrane OOP (TC 1.B.6) superfamily. OmpA family. In terms of assembly, monomer and homodimer.

The protein resides in the cell outer membrane. With TolR probably plays a role in maintaining the position of the peptidoglycan cell wall in the periplasm. Acts as a porin with low permeability that allows slow penetration of small solutes; an internal gate slows down solute passage. Functionally, required for conjugation with F-type plasmids; probably serves as the mating receptor on recipient cells. This chain is Outer membrane protein A, found in Shigella dysenteriae.